The sequence spans 130 residues: Phosphomevalonate dehydratase small subunit (130 aa).

The Proton acceptor role is filled by serine 62.

This sequence belongs to the AcnX type II small subunit family. Heterodimer composed of a large subunit (PMDh-L) and a small subunit (PMDh-S).

It carries out the reaction (R)-5-phosphomevalonate = (2E)-3-methyl-5-phosphooxypent-2-enoate + H2O. It participates in isoprenoid biosynthesis; isopentenyl diphosphate biosynthesis via mevalonate pathway. Functionally, component of a hydro-lyase that catalyzes the dehydration of mevalonate 5-phosphate (MVA5P) to form trans-anhydromevalonate 5-phosphate (tAHMP). Involved in the archaeal mevalonate (MVA) pathway, which provides fundamental precursors for isoprenoid biosynthesis, such as isopentenyl diphosphate (IPP) and dimethylallyl diphosphate (DMAPP). The chain is Phosphomevalonate dehydratase small subunit from Thermococcus sibiricus (strain DSM 12597 / MM 739).